An 824-amino-acid polypeptide reads, in one-letter code: Fibroblast growth factor receptor 2 (824 aa).

The N-terminal stretch at 1-21 is a signal peptide; the sequence is MFSWSYLMGLVMVATATLSLA. Residues 22–374 are Extracellular-facing; sequence RPSYNIAEDT…LDSSSSEYTE (353 aa). An Ig-like C2-type 1 domain is found at 25 to 125; the sequence is YNIAEDTTLE…ETRYFIVNIT (101 aa). Cys62 and Cys107 are oxidised to a cystine. Residues Asn83, Asn123, and Asn128 are each glycosylated (N-linked (GlcNAc...) asparagine). Positions 125-152 are disordered; it reads TDGNSSGDDEDDNDGSEDFTNDNNHKRA. Positions 131 to 144 are enriched in acidic residues; the sequence is GDDEDDNDGSEDFT. Ig-like C2-type domains lie at 153–246 and 254–356; these read PYWT…YHLD and PPIL…AWLT. Residues 160-177 are heparin-binding; the sequence is KLEKKLHAVPAANTVKFR. An intrachain disulfide couples Cys178 to Cys230. N-linked (GlcNAc...) asparagine glycosylation is found at Asn227, Asn240, Asn264, Asn295, Asn316, and Asn329. Residues Cys277 and Cys340 are joined by a disulfide bond. A helical transmembrane segment spans residues 375–395; it reads IAIYCVGGFLIACMIGTIMMC. The Cytoplasmic portion of the chain corresponds to 396–824; that stretch reads HMKGRGKKSD…PLKHEATQPA (429 aa). Residue Tyr463 is modified to Phosphotyrosine; by autocatalysis. One can recognise a Protein kinase domain in the interval 478 to 767; that stretch reads LTLGKPLGEG…LTQTTNEEYL (290 aa). ATP is bound by residues 484–492, Lys514, 562–564, and Asn568; these read LGEGCFGQV and EYA. The residue at position 583 (Tyr583) is a Phosphotyrosine; by autocatalysis. The Proton acceptor role is filled by Asp623. A phosphotyrosine; by autocatalysis mark is found at Tyr653, Tyr654, and Tyr766. Residues 801 to 824 are disordered; the sequence is SMNLAFPNPNTQMAPLKHEATQPA.

The protein belongs to the protein kinase superfamily. Tyr protein kinase family. Fibroblast growth factor receptor subfamily. As to quaternary structure, monomer. Homodimer after ligand binding. Autophosphorylated. Binding of FGF family members together with heparan sulfate proteoglycan or heparin promotes receptor dimerization and autophosphorylation on tyrosine residues. Autophosphorylation occurs in trans between the two FGFR molecules present in the dimer. Post-translationally, N-glycosylated in the endoplasmic reticulum. The N-glycan chains undergo further maturation to an Endo H-resistant form in the Golgi apparatus. In terms of processing, ubiquitinated. FGFR2 is rapidly ubiquitinated after autophosphorylation, leading to internalization and degradation. Subject to degradation both in lysosomes and by the proteasome.

It is found in the cell membrane. Its subcellular location is the golgi apparatus. The protein resides in the cytoplasmic vesicle. It catalyses the reaction L-tyrosyl-[protein] + ATP = O-phospho-L-tyrosyl-[protein] + ADP + H(+). With respect to regulation, present in an inactive conformation in the absence of bound ligand. Ligand binding leads to dimerization and activation by autophosphorylation on tyrosine residues. In terms of biological role, tyrosine-protein kinase that acts as a cell-surface receptor for fibroblast growth factors and plays an essential role in the regulation of cell proliferation, differentiation, migration and apoptosis, and in the regulation of embryonic development. Required for normal embryonic patterning, limb bud development, lung morphogenesis, osteogenesis and skin development. Plays an essential role in the regulation of osteoblast differentiation, proliferation and apoptosis, and is required for normal skeleton development. Promotes cell proliferation in keratinocytes and immature osteoblasts, but promotes apoptosis in differentiated osteoblasts. Phosphorylates PLCG1, FRS2 and PAK4. Ligand binding leads to the activation of several signaling cascades. Activation of PLCG1 leads to the production of the cellular signaling molecules diacylglycerol and inositol 1,4,5-trisphosphate. Phosphorylation of FRS2 triggers recruitment of GRB2, GAB1, PIK3R1 and SOS1, and mediates activation of RAS, MAPK1/ERK2, MAPK3/ERK1 and the MAP kinase signaling pathway, as well as of the AKT1 signaling pathway. FGFR2 signaling is down-regulated by ubiquitination, internalization and degradation. Mutations that lead to constitutive kinase activation or impair normal FGFR2 maturation, internalization and degradation lead to aberrant signaling. Over-expressed FGFR2 promotes activation of STAT1. The chain is Fibroblast growth factor receptor 2 (FGFR2) from Pleurodeles waltl (Iberian ribbed newt).